The primary structure comprises 800 residues: Phosphate transporter PHO1 homolog 9 (800 aa).

Positions 1-346 (MKFGREFETQ…SRNASKPYLN (346 aa)) constitute an SPX domain. Residues 1–398 (MKFGREFETQ…KTKREKHRIT (398 aa)) lie on the Cytoplasmic side of the membrane. Disordered regions lie at residues 38–77 (QKQQRPPPPPPPPSTGDTVPLKTDGGEGGGGGGGGGPGLS), 91–119 (NRASRSPKKSHKHHNPLSSKRHHHHHNHH), and 212–234 (PDLNSVASAPSSPHSTMRTPAPS). Pro residues predominate over residues 42–51 (RPPPPPPPPS). The segment covering 63-75 (GEGGGGGGGGGPG) has biased composition (gly residues). Residues 95–119 (RSPKKSHKHHNPLSSKRHHHHHNHH) show a composition bias toward basic residues. Polar residues predominate over residues 216–229 (SVASAPSSPHSTMR). The chain crosses the membrane as a helical span at residues 399–419 (YFLGFFSGCAVALAIAITVLV). Residues 420–439 (HIRGLTKSEGRHQYMENIFP) lie on the Extracellular side of the membrane. The chain crosses the membrane as a helical span at residues 440 to 460 (LYSLFGFVAVHLFMYAADIYF). The Cytoplasmic segment spans residues 461–483 (WSRYRVNYPFIFGFEQGNDLGYR). The helical transmembrane segment at 484-504 (EVLLVGSGLAVLTFGGVISNL) threads the bilayer. At 505-520 (DMEMDPRTKSFSVITE) the chain is on the extracellular side. The chain crosses the membrane as a helical span at residues 521–541 (LVPLALLVCLMMVLFCPFNII). At 542–670 (YRSSRYFFVG…IFEMKRGTYW (129 aa)) the chain is on the cytoplasmic side. The region spanning 606–800 (YDSEIYKELY…FQELGGSKSV (195 aa)) is the EXS domain. The chain crosses the membrane as a helical span at residues 671-691 (LTVAVTTSSIATLFNTYWDIF). The Extracellular segment spans residues 692–718 (RDWGLMNRNSKNPWLRDKLLVPYKSIY). A helical transmembrane segment spans residues 719–739 (FIVMVANVVLRLAWMQTVLGI). Residues 740 to 800 (KEAPFLHKRA…FQELGGSKSV (61 aa)) lie on the Cytoplasmic side of the membrane.

The protein belongs to the SYG1 (TC 2.A.94) family. As to expression, specifically expressed in pollen grains.

It localises to the cell membrane. Its function is as follows. May transport inorganic phosphate (Pi). The protein is Phosphate transporter PHO1 homolog 9 (PHO1-H9) of Arabidopsis thaliana (Mouse-ear cress).